Consider the following 241-residue polypeptide: Uridylate kinase (241 aa).

15 to 18 (KLSG) lines the ATP pocket. The interval 23-28 (GTEGFG) is involved in allosteric activation by GTP. G57 lines the UMP pocket. ATP is bound by residues G58 and R62. Residues D77 and 138 to 145 (TGNPFFTT) contribute to the UMP site. The ATP site is built by T165, F171, and D174.

This sequence belongs to the UMP kinase family. As to quaternary structure, homohexamer.

It localises to the cytoplasm. The enzyme catalyses UMP + ATP = UDP + ADP. Its pathway is pyrimidine metabolism; CTP biosynthesis via de novo pathway; UDP from UMP (UMPK route): step 1/1. With respect to regulation, allosterically activated by GTP. Inhibited by UTP. In terms of biological role, catalyzes the reversible phosphorylation of UMP to UDP. This chain is Uridylate kinase, found in Shigella dysenteriae serotype 1 (strain Sd197).